The following is a 321-amino-acid chain: Glycerol-3-phosphate dehydrogenase [NAD(P)+] (321 aa).

Serine 10, tryptophan 11, arginine 31, arginine 32, tyrosine 47, and lysine 98 together coordinate NADPH. Sn-glycerol 3-phosphate-binding residues include lysine 98, glycine 125, and serine 127. Residue alanine 129 participates in NADPH binding. Positions 177, 230, 240, 241, and 242 each coordinate sn-glycerol 3-phosphate. The active-site Proton acceptor is the lysine 177. Arginine 241 is an NADPH binding site. NADPH contacts are provided by valine 265 and glutamate 267.

The protein belongs to the NAD-dependent glycerol-3-phosphate dehydrogenase family.

The protein localises to the cytoplasm. The enzyme catalyses sn-glycerol 3-phosphate + NAD(+) = dihydroxyacetone phosphate + NADH + H(+). The catalysed reaction is sn-glycerol 3-phosphate + NADP(+) = dihydroxyacetone phosphate + NADPH + H(+). Its pathway is membrane lipid metabolism; glycerophospholipid metabolism. Catalyzes the reduction of the glycolytic intermediate dihydroxyacetone phosphate (DHAP) to sn-glycerol 3-phosphate (G3P), the key precursor for phospholipid synthesis. This chain is Glycerol-3-phosphate dehydrogenase [NAD(P)+], found in Thermotoga sp. (strain RQ2).